Reading from the N-terminus, the 182-residue chain is Ribosome maturation factor RimM (182 aa).

The region spanning 106-179 (EGEFHVLDLI…RIEITPPPGL (74 aa)) is the PRC barrel domain.

It belongs to the RimM family. Binds ribosomal protein uS19.

The protein resides in the cytoplasm. In terms of biological role, an accessory protein needed during the final step in the assembly of 30S ribosomal subunit, possibly for assembly of the head region. Essential for efficient processing of 16S rRNA. May be needed both before and after RbfA during the maturation of 16S rRNA. It has affinity for free ribosomal 30S subunits but not for 70S ribosomes. The chain is Ribosome maturation factor RimM from Synechococcus elongatus (strain ATCC 33912 / PCC 7942 / FACHB-805) (Anacystis nidulans R2).